Consider the following 496-residue polypeptide: DEAD-box ATP-dependent RNA helicase 38 (496 aa).

Residues 1–91 (MADTVEKVPT…SGDTPYTSAS (91 aa)) form a disordered region. An N-acetylalanine modification is found at Ala2. Low complexity predominate over residues 7 to 25 (KVPTVVESSSSSTVEASNS). Basic and acidic residues predominate over residues 27-40 (EKTEPTTEKKKWGD). Over residues 41–51 (VEDDDDEEEAV) the composition is skewed to acidic residues. A compositionally biased stretch (polar residues) spans 78 to 91 (KAVTSGDTPYTSAS). The short motif at 91 to 120 (SRFEDLNLSPELMKGLYVEMKFEKPSKIQA) is the Q motif element. The Helicase ATP-binding domain maps to 125–301 (MIMTPPHKHL…ARTVKDPNQL (177 aa)). 138 to 145 (AHNGSGKT) lines the ATP pocket. The DEAD box signature appears at 245-248 (DEAD). Residues 329 to 483 (VIKDQIMELG…EIKSWNSEEE (155 aa)) form the Helicase C-terminal domain.

This sequence belongs to the DEAD box helicase family. DDX19/DBP5 subfamily. Interacts with NUP214 (via N-terminus). In terms of tissue distribution, constitutively expressed.

The protein resides in the cytoplasm. Its subcellular location is the nucleus. The catalysed reaction is ATP + H2O = ADP + phosphate + H(+). ATP-dependent RNA helicase essential for mRNA export from the nucleus. Plays an important role in the positive regulation of CBF/DREB transcription factors. The sequence is that of DEAD-box ATP-dependent RNA helicase 38 (RH38) from Arabidopsis thaliana (Mouse-ear cress).